The following is a 479-amino-acid chain: Proline--tRNA ligase (479 aa).

Belongs to the class-II aminoacyl-tRNA synthetase family. ProS type 3 subfamily. Homodimer.

It is found in the cytoplasm. It catalyses the reaction tRNA(Pro) + L-proline + ATP = L-prolyl-tRNA(Pro) + AMP + diphosphate. Functionally, catalyzes the attachment of proline to tRNA(Pro) in a two-step reaction: proline is first activated by ATP to form Pro-AMP and then transferred to the acceptor end of tRNA(Pro). The polypeptide is Proline--tRNA ligase (Agathobacter rectalis (strain ATCC 33656 / DSM 3377 / JCM 17463 / KCTC 5835 / VPI 0990) (Eubacterium rectale)).